The following is a 392-amino-acid chain: MEARVCVLFGAAALLRLLLLCVGVYQDQTLKLKYTDVDYHVFTDAARFITQGESPYRRSTFRYTPLLALLLVPNVYLSLLFGKLLFGFCDLLSGLLMFRLLVLRGASHGSACVSCGLWLLNPLPMAVSTRGNAESVLAVLVLSTLLCLQLRKHTTAALLFGLSVHMKIYPVTYALPIALALTAAPARGRGVLLRFFSPALLRFAAVSAAVFLSLGLIFYCRYGWEFLQEAYLYHLTRRDLRHNFSPFFYLQYVCAERCWSSGLLPLLLLPQLLLLLLASAAFSSDLPFCCFLHTAVFVSFNRVCTSQYFLWYLCLLPVVLPRLRLRLGRGLLLLLLWLLLQGLWLAPAYLLEFQGWNSFSWIWAASLLFLLTNTFILAQIIQHYRPHDRKAD.

The Cytoplasmic segment spans residues M1–R4. Residues V5–Y25 traverse the membrane as a helical segment. Over Q26–P65 the chain is Lumenal. The helical transmembrane segment at L66 to F86 threads the bilayer. Residues G87–M125 lie on the Cytoplasmic side of the membrane. Residues A126–L148 form a helical membrane-spanning segment. The Lumenal portion of the chain corresponds to Q149–A156. The helical transmembrane segment at A157 to I177 threads the bilayer. At A178 to P198 the chain is on the cytoplasmic side. Residues A199–Y219 form a helical membrane-spanning segment. The Lumenal segment spans residues C220 to S261. Residues G262–F282 form a helical membrane-spanning segment. The Cytoplasmic segment spans residues S283 to R302. A helical membrane pass occupies residues V303–L323. Over R324–G330 the chain is Lumenal. The chain crosses the membrane as a helical span at residues L331–L351. Topologically, residues E352 to S360 are cytoplasmic. A helical transmembrane segment spans residues W361–I381. Topologically, residues Q382–D392 are lumenal.

This sequence belongs to the PIGM family. As to quaternary structure, part of the glycosylphosphatidylinositol-mannosyltransferase I complex that is composed of PIGM and PIGX.

Its subcellular location is the endoplasmic reticulum membrane. It functions in the pathway glycolipid biosynthesis; glycosylphosphatidylinositol-anchor biosynthesis. Its function is as follows. Catalytic subunit of the glycosylphosphatidylinositol-mannosyltransferase I complex which catalyzes the transfer of the first mannose, via an alpha-1,4 bond from a dolichol-phosphate-mannose (Dol-P-Man) to the glucosaminyl acyl phosphatidylinositol (GlcN-(acyl)PI) intermediate to generate alpha-D-Man-(1-&gt;4)-alpha-D-GlcN-(1-&gt;6)-(1-radyl,2-acyl-sn-glycero-3-phospho)-2-acyl-inositol and participates in the sixth step of the glycosylphosphatidylinositol-anchor biosynthesis. This Danio rerio (Zebrafish) protein is GPI alpha-1,4-mannosyltransferase I, catalytic subunit.